Reading from the N-terminus, the 29-residue chain is KSAAEVQNTQQAIIPAQEKANLGNQNIMA.

Homodimer.

It localises to the cytoplasm. The chain is NADP phosphatase 1 from Arthrobacter sp. (strain KM).